We begin with the raw amino-acid sequence, 2130 residues long: Dedicator of cytokinesis protein 7 (2130 aa).

Residue serine 30 is modified to Phosphoserine. The disordered stretch occupies residues 137–175 (GFNPNTLDKQKERQKGLPRQVFESDEAPDGSSYQDEQDD). 2 positions are modified to phosphoserine: serine 180 and serine 182. Positions 365-395 (FKEADATKNKEKLEKLKSQADQFCQRLGKYR) form a coiled coil. Residue lysine 381 is modified to N6-methyllysine. Residue threonine 450 is modified to Phosphothreonine. Residue serine 452 is modified to Phosphoserine. In terms of domain architecture, C2 DOCK-type spans 561–727 (RNLLYIYPQS…GVFNVEVVAV (167 aa)). Phosphoserine is present on residues serine 862, serine 864, serine 882, serine 888, serine 896, serine 900, and serine 905. A compositionally biased stretch (low complexity) spans 888 to 901 (SLNLNRSRSLSNSN). Positions 888 to 966 (SLNLNRSRSL…SCNRMSSHTE (79 aa)) are disordered. 2 positions are modified to phosphothreonine: threonine 907 and threonine 909. Phosphoserine occurs at positions 910, 929, 963, 1382, 1420, 1422, 1424, and 1428. The span at 942-966 (SNPSPSAESTQAMDRSCNRMSSHTE) shows a compositional bias: polar residues. The DOCKER domain occupies 1668–2104 (KGYQTSPDLR…LQPLINRKIP (437 aa)). Lysine 1952 carries the N6-acetyllysine modification. The stretch at 2076–2102 (DQKEYQRELERNYHRLKEALQPLINRK) forms a coiled coil. Serine 2119 is modified (phosphoserine).

It belongs to the DOCK family. In terms of assembly, component of the DOCK7-induced septin displacement/DISP complex, at least composed of DOCK7, LRCH3 and MYO6. Interacts with TSC1. Interacts with nucleotide-free RAC1 and RAC3. Interacts with TACC3. Interacts with CRY1. Interacts with NOD2.

The protein localises to the cell projection. It localises to the axon. Functions as a guanine nucleotide exchange factor (GEF), which activates Rac1 and Rac3 Rho small GTPases by exchanging bound GDP for free GTP. Does not have a GEF activity for CDC42. Required for STMN1 'Ser-15' phosphorylation during axon formation and consequently for neuronal polarization. As part of the DISP complex, may regulate the association of septins with actin and thereby regulate the actin cytoskeleton. Has a role in pigmentation. Involved in the regulation of cortical neurogenesis through the control of radial glial cells (RGCs) proliferation versus differentiation; negatively regulates the basal-to-apical interkinetic nuclear migration of RGCs by antagonizing the microtubule growth-promoting function of TACC3. The polypeptide is Dedicator of cytokinesis protein 7 (Dock7) (Mus musculus (Mouse)).